A 549-amino-acid chain; its full sequence is Elongator complex protein 3 (549 aa).

One can recognise a Radical SAM core domain in the interval 84–374 (RTASGIAVVA…YRVQRDIPMP (291 aa)). The [4Fe-4S] cluster site is built by C101, C111, and C114. Residues K166, 476-479 (ELHV), 499-501 (FGM), and Y532 contribute to the acetyl-CoA site. The region spanning 398-549 (TECRDVRTRE…EGPYMVKKLD (152 aa)) is the N-acetyltransferase domain.

It belongs to the ELP3 family. As to quaternary structure, component of the elongator complex. Interacts with transcriptional repressors snai1 and snai2; interaction with snai1 inhibits its ubiquitination and stabilizes it. [4Fe-4S] cluster is required as a cofactor.

It localises to the cytoplasm. The protein localises to the nucleus. It catalyses the reaction uridine(34) in tRNA + acetyl-CoA + S-adenosyl-L-methionine + H2O = 5-(carboxymethyl)uridine(34) in tRNA + 5'-deoxyadenosine + L-methionine + CoA + 2 H(+). The protein operates within tRNA modification; 5-methoxycarbonylmethyl-2-thiouridine-tRNA biosynthesis. Its function is as follows. Catalytic tRNA acetyltransferase subunit of the elongator complex which is required for multiple tRNA modifications, including mcm5U (5-methoxycarbonylmethyl uridine), mcm5s2U (5-methoxycarbonylmethyl-2-thiouridine), and ncm5U (5-carbamoylmethyl uridine). In the elongator complex, acts as a tRNA uridine(34) acetyltransferase by mediating formation of carboxymethyluridine in the wobble base at position 34 in tRNAs. Stabilizes transcriptional repressor snai1 by inhibiting its ubiquitination which promotes neural crest cell migration. The polypeptide is Elongator complex protein 3 (Xenopus tropicalis (Western clawed frog)).